Consider the following 262-residue polypeptide: Acyl-[acyl-carrier-protein]--UDP-N-acetylglucosamine O-acyltransferase (262 aa).

It belongs to the transferase hexapeptide repeat family. LpxA subfamily. In terms of assembly, homotrimer.

Its subcellular location is the cytoplasm. It carries out the reaction a (3R)-hydroxyacyl-[ACP] + UDP-N-acetyl-alpha-D-glucosamine = a UDP-3-O-[(3R)-3-hydroxyacyl]-N-acetyl-alpha-D-glucosamine + holo-[ACP]. It functions in the pathway glycolipid biosynthesis; lipid IV(A) biosynthesis; lipid IV(A) from (3R)-3-hydroxytetradecanoyl-[acyl-carrier-protein] and UDP-N-acetyl-alpha-D-glucosamine: step 1/6. Its function is as follows. Involved in the biosynthesis of lipid A, a phosphorylated glycolipid that anchors the lipopolysaccharide to the outer membrane of the cell. This is Acyl-[acyl-carrier-protein]--UDP-N-acetylglucosamine O-acyltransferase from Vibrio atlanticus (strain LGP32) (Vibrio splendidus (strain Mel32)).